Consider the following 120-residue polypeptide: Membrane-anchored ubiquitin-fold protein 4 (120 aa).

A Ubiquitin-like domain is found at 7–73 (VELKFRLYDG…LENGKTVAQC (67 aa)). Cysteine 115 is lipidated: S-palmitoyl cysteine. Cysteine 117 is modified (cysteine methyl ester). Cysteine 117 carries the S-farnesyl cysteine lipid modification. Positions 118–120 (TIM) are cleaved as a propeptide — removed in mature form.

In terms of tissue distribution, ubiquitous.

The protein localises to the cell membrane. Its function is as follows. May serve as docking site to facilitate the association of other proteins to the plasma membrane. This is Membrane-anchored ubiquitin-fold protein 4 (MUB4) from Arabidopsis thaliana (Mouse-ear cress).